Reading from the N-terminus, the 65-residue chain is UPF0434 protein RPB_0294 (65 aa).

This sequence belongs to the UPF0434 family.

This Rhodopseudomonas palustris (strain HaA2) protein is UPF0434 protein RPB_0294.